Here is an 864-residue protein sequence, read N- to C-terminus: Mitochondrial 15S rRNA processing factor CCM1 (864 aa).

The transit peptide at M1–R76 directs the protein to the mitochondrion. 2 PPR repeats span residues N319–H353 and D356–P390.

This sequence belongs to the CCM1 family. In terms of assembly, binds to mitochondrial small subunit 15S rRNA.

It localises to the mitochondrion. In terms of biological role, regulates mitochondrial small subunit maturation by controlling 15S rRNA 5'-end processing. Localizes to the 5' precursor of the 15S rRNA in a position that is subsequently occupied by mS47 in the mature yeast mtSSU. Uses structure and sequence-specific RNA recognition, binding to a single-stranded region of the precursor and specifically recognizing bases -6 to -1. The exchange of Ccm1 for mS47 is coupled to the irreversible removal of precursor rRNA that is accompanied by conformational changes of the mitoribosomal proteins uS5m and mS26. These conformational changes signal completion of 5'-end rRNA processing through protection of the mature 5'-end of the 15S rRNA and stabilization of mS47. The removal of the 5' precursor together with the dissociation of Ccm1 may be catalyzed by the 5'-3' exoribonuclease Pet127. Involved in the specific removal of group I introns in mitochondrial encoded transcripts. This is Mitochondrial 15S rRNA processing factor CCM1 (CCM1) from Saccharomyces cerevisiae (strain Lalvin EC1118 / Prise de mousse) (Baker's yeast).